The sequence spans 437 residues: Dihydrofolate synthase/folylpolyglutamate synthase (437 aa).

Position 28 to 30 (28 to 30 (DLG)) interacts with 7,8-dihydropteroate. 58–61 (GKGT) provides a ligand contact to ATP. Position 82 (Ser82) interacts with Mg(2+). Residue 120–123 (TYFE) coordinates 7,8-dihydropteroate. A Mg(2+)-binding site is contributed by Glu144. 7,8-dihydropteroate is bound at residue 151–153 (LDA). Residue His171 coordinates Mg(2+). ATP-binding residues include Asn255, Arg287, and Asp316.

This sequence belongs to the folylpolyglutamate synthase family. In terms of assembly, monomer. Requires Mg(2+) as cofactor.

It carries out the reaction 7,8-dihydropteroate + L-glutamate + ATP = 7,8-dihydrofolate + ADP + phosphate + H(+). The catalysed reaction is (6S)-5,6,7,8-tetrahydrofolyl-(gamma-L-Glu)(n) + L-glutamate + ATP = (6S)-5,6,7,8-tetrahydrofolyl-(gamma-L-Glu)(n+1) + ADP + phosphate + H(+). It catalyses the reaction 10-formyltetrahydrofolyl-(gamma-L-Glu)(n) + L-glutamate + ATP = 10-formyltetrahydrofolyl-(gamma-L-Glu)(n+1) + ADP + phosphate + H(+). The enzyme catalyses (6R)-5,10-methylenetetrahydrofolyl-(gamma-L-Glu)(n) + L-glutamate + ATP = (6R)-5,10-methylenetetrahydrofolyl-(gamma-L-Glu)(n+1) + ADP + phosphate + H(+). Its pathway is cofactor biosynthesis; tetrahydrofolate biosynthesis; 7,8-dihydrofolate from 2-amino-4-hydroxy-6-hydroxymethyl-7,8-dihydropteridine diphosphate and 4-aminobenzoate: step 2/2. It functions in the pathway cofactor biosynthesis; tetrahydrofolylpolyglutamate biosynthesis. Functions in two distinct reactions of the de novo folate biosynthetic pathway. Catalyzes the addition of a glutamate residue to dihydropteroate (7,8-dihydropteroate or H2Pte) to form dihydrofolate (7,8-dihydrofolate monoglutamate or H2Pte-Glu). Also catalyzes successive additions of L-glutamate to tetrahydrofolate or 10-formyltetrahydrofolate or 5,10-methylenetetrahydrofolate, leading to folylpolyglutamate derivatives. The sequence is that of Dihydrofolate synthase/folylpolyglutamate synthase (folC) from Haemophilus influenzae (strain ATCC 51907 / DSM 11121 / KW20 / Rd).